The chain runs to 449 residues: Phosphoglucosamine mutase (449 aa).

Catalysis depends on S100, which acts as the Phosphoserine intermediate. 4 residues coordinate Mg(2+): S100, D241, D243, and D245. A Phosphoserine modification is found at S100.

It belongs to the phosphohexose mutase family. Requires Mg(2+) as cofactor. Post-translationally, activated by phosphorylation.

It carries out the reaction alpha-D-glucosamine 1-phosphate = D-glucosamine 6-phosphate. Catalyzes the conversion of glucosamine-6-phosphate to glucosamine-1-phosphate. The sequence is that of Phosphoglucosamine mutase from Clostridium botulinum (strain Langeland / NCTC 10281 / Type F).